Consider the following 998-residue polypeptide: SEC23-interacting protein (998 aa).

The segment at M1–E363 is interaction with SEC23A. Residues L50–A246 form a disordered region. Residues D54–S63 show a composition bias toward acidic residues. Polar residues predominate over residues L65–F78. Positions S79–S88 are enriched in low complexity. 3 stretches are compositionally biased toward polar residues: residues I94–Q108, P143–S158, and A232–V241. S600 bears the Phosphoserine mark. One can recognise an SAM domain in the interval E640–L703. The segment at T720–E742 is disordered. Positions G722–E732 are enriched in basic and acidic residues. Phosphoserine occurs at positions 735, 748, and 924. The region spanning L777–R987 is the DDHD domain.

This sequence belongs to the PA-PLA1 family. As to quaternary structure, interacts with SEC23A.

It is found in the cytoplasmic vesicle. The protein localises to the COPII-coated vesicle membrane. The protein resides in the endoplasmic reticulum. Its function is as follows. Plays a role in the organization of endoplasmic reticulum exit sites. Specifically binds to phosphatidylinositol 3-phosphate (PI(3)P), phosphatidylinositol 4-phosphate (PI(4)P) and phosphatidylinositol 5-phosphate (PI(5)P). This Mus musculus (Mouse) protein is SEC23-interacting protein (Sec23ip).